We begin with the raw amino-acid sequence, 91 residues long: Probable Fe(2+)-trafficking protein (91 aa).

The protein belongs to the Fe(2+)-trafficking protein family.

Functionally, could be a mediator in iron transactions between iron acquisition and iron-requiring processes, such as synthesis and/or repair of Fe-S clusters in biosynthetic enzymes. This chain is Probable Fe(2+)-trafficking protein, found in Burkholderia cenocepacia (strain ATCC BAA-245 / DSM 16553 / LMG 16656 / NCTC 13227 / J2315 / CF5610) (Burkholderia cepacia (strain J2315)).